We begin with the raw amino-acid sequence, 953 residues long: Probable isoleucine--tRNA ligase, cytoplasmic (953 aa).

The 'HIGH' region motif lies at 45-55 (PFATGLPHYGH). Residues 634-638 (KMSKR) carry the 'KMSKS' region motif. Residue Lys637 participates in ATP binding.

It belongs to the class-I aminoacyl-tRNA synthetase family.

It localises to the cytoplasm. The enzyme catalyses tRNA(Ile) + L-isoleucine + ATP = L-isoleucyl-tRNA(Ile) + AMP + diphosphate. This Enterocytozoon bieneusi (strain H348) (Microsporidian parasite) protein is Probable isoleucine--tRNA ligase, cytoplasmic.